We begin with the raw amino-acid sequence, 266 residues long: E3 ubiquitin-protein ligase RNF170 (266 aa).

Over 1-26 the chain is Lumenal; sequence MEGSVCVDGAAAPAPDEASLIEGVSN. The helical transmembrane segment at 27–47 threads the bilayer; the sequence is AVLLVLVLSVTLLAGLTTLLC. At 48-209 the chain is on the cytoplasmic side; it reads RSEQQRIHPE…GGLFWMFRVR (162 aa). Residues 88–131 form an RING-type zinc finger; the sequence is CPVCLQQAVLPVETNCGHLFCGSCIIAYWRYGTWLGAISCPICR. Residues 210–230 traverse the membrane as a helical segment; the sequence is ILLCVCGALAYLVSPLDFLPE. Gly231 is a topological domain (lumenal). Residues 232–252 traverse the membrane as a helical segment; the sequence is VLGLLGFLDDFFVILLLFIYI. Over 253 to 266 the chain is Cytoplasmic; sequence SIMYREVVTQRLAG.

In terms of tissue distribution, highly expressed in the developing brain, and less within intersomitic structures of the trunk.

It localises to the endoplasmic reticulum membrane. The catalysed reaction is S-ubiquitinyl-[E2 ubiquitin-conjugating enzyme]-L-cysteine + [acceptor protein]-L-lysine = [E2 ubiquitin-conjugating enzyme]-L-cysteine + N(6)-ubiquitinyl-[acceptor protein]-L-lysine.. It participates in protein modification; protein ubiquitination. Functionally, E3 ubiquitin-protein ligase that plays an essential role in stimulus-induced inositol 1,4,5-trisphosphate receptor (ITPR) ubiquitination and degradation via the endoplasmic reticulum-associated degradation (ERAD) pathway. Also involved in ITPR turnover in resting cells. This chain is E3 ubiquitin-protein ligase RNF170 (rnf170), found in Danio rerio (Zebrafish).